Consider the following 161-residue polypeptide: Cuticle protein 16.8 (161 aa).

Gln1 is modified (pyrrolidone carboxylic acid). A compositionally biased stretch (pro residues) spans 1–10 (QSEPAGPPQP). Disordered stretches follow at residues 1–44 (QSEP…YSYT) and 67–103 (ETNE…PAKP). The region spanning 8–74 (PQPYTFSYDN…TVETNEPGTK (67 aa)) is the Chitin-binding type R&amp;R domain. Positions 67 to 86 (ETNEPGTKTSNPADAQIVSN) are enriched in polar residues. A compositionally biased stretch (low complexity) spans 87–103 (AATDSYSPSPASSPAKP).

In terms of biological role, component of the cuticle of the tick. Binds chitin. This is Cuticle protein 16.8 from Ixodes ricinus (Common tick).